A 488-amino-acid polypeptide reads, in one-letter code: V-type proton ATPase subunit B 1 (488 aa).

It belongs to the ATPase alpha/beta chains family. V-ATPase is a heteromultimeric enzyme composed of a peripheral catalytic V1 complex (main components: subunits A, B, C, D, E, and F) attached to an integral membrane V0 proton pore complex (main component: the proteolipid protein).

Functionally, non-catalytic subunit of the peripheral V1 complex of vacuolar ATPase. V-ATPase is responsible for acidifying a variety of intracellular compartments in eukaryotic cells. The polypeptide is V-type proton ATPase subunit B 1 (Gossypium hirsutum (Upland cotton)).